A 45-amino-acid chain; its full sequence is Omega-hexatoxin-Hv2a (45 aa).

Cystine bridges form between Cys4–Cys18, Cys11–Cys24, and Cys17–Cys29.

It belongs to the neurotoxin 15 family. 02 (omega-actx) subfamily. Expressed by the venom gland.

It is found in the secreted. Functionally, potent inhibitor of insect (bee brain), but not mammalian (rat trigeminal neurons), voltage-gated calcium channels (Cav). In vivo, injection into lone star ticks (Amblyomma americanum) induces curling of all eight legs into closed loops, followed by death. The polypeptide is Omega-hexatoxin-Hv2a (Hadronyche versuta (Blue mountains funnel-web spider)).